The sequence spans 233 residues: Small ribosomal subunit protein uS2 (233 aa).

It belongs to the universal ribosomal protein uS2 family.

The protein is Small ribosomal subunit protein uS2 of Clostridium botulinum (strain Alaska E43 / Type E3).